The following is a 469-amino-acid chain: MDIEDVMNKLSLKNKKVLNRSSEYSRLIKVKRPMGLGPLEMCKPGACIFVACKELSIELNKSQLVRVLGTNDKLFEQSILALYTILGKKRPPYSIVEISNTFKLNSTICESSENLLKLYRTKILGGIEEVQSQFTNIDDGIFSAASVYIMTQQHSINIDHTLLLSLVDCSQETFQRAMNAITQCCYQGESIVKLKKTPPKNKQNTILRSPTSILISSSSTLNNTTTSTTTTAPKSPIPIPSLTPISQIKNLTTKPIVSPSSSPLLSSISPPKVLATPTLSSSSSSSSSSSSSLSPPLSSNPTTDLSSTNEPIVFNISSELLPIPPTTTFKNDGNENKNNTKNCNIEIIEEISNVDESPFNDNSVKKIEQSNPNISNKKRSRDELEKESELGKSQPPQPQQQPQQQQQQQKEKSVKNKINEGDLTLEQERLLIKKKKEQQFNDWKNSDFAKSKPTPVNATKQLTLDSFFK.

Low complexity-rich tracts occupy residues 218–234 (SSTLNNTTTSTTTTAPK) and 275–308 (ATPTLSSSSSSSSSSSSSLSPPLSSNPTTDLSST). 4 disordered regions span residues 218-241 (SSTLNNTTTSTTTTAPKSPIPIPS), 275-309 (ATPTLSSSSSSSSSSSSSLSPPLSSNPTTDLSSTN), 356-423 (ESPF…EGDL), and 436-469 (KEQQFNDWKNSDFAKSKPTPVNATKQLTLDSFFK). 2 stretches are compositionally biased toward basic and acidic residues: residues 380–390 (SRDELEKESEL) and 409–423 (QKEKSVKNKINEGDL). The span at 454–469 (TPVNATKQLTLDSFFK) shows a compositional bias: polar residues.

It belongs to the ORC6 family. ORC is composed of six subunits.

The protein resides in the nucleus. Functionally, component of the origin recognition complex (ORC) that binds origins of replication. DNA-binding is ATP-dependent, however specific DNA sequences that define origins of replication have not been identified so far. ORC is required to assemble the pre-replication complex necessary to initiate DNA replication. This Dictyostelium discoideum (Social amoeba) protein is Origin recognition complex subunit 6 (orcF).